A 237-amino-acid polypeptide reads, in one-letter code: MLEWRDEGALLSVRRHGESAAIIEVFTASHGRHLGVVRGGASRRHAPVLQPGAQLDLTWKARLDDHMGAFTVEPLRARTGIFGDRLALAGLNAICAMLHVVLPEREPHVGLWRESIELMDALAAPGWPAAYLRWEMRLLEEAGFGLDLTRCAVTGSREDLAFVSPRTGRAVGRAAAGDWADRLFPLPLALLGQGPASGPEVRQGLAITGHFLARELPLAGRPLPEARARLIDLLARG.

It belongs to the RecO family.

In terms of biological role, involved in DNA repair and RecF pathway recombination. The protein is DNA repair protein RecO of Cereibacter sphaeroides (strain ATCC 17025 / ATH 2.4.3) (Rhodobacter sphaeroides).